A 219-amino-acid polypeptide reads, in one-letter code: 2-C-methyl-D-erythritol 4-phosphate cytidylyltransferase (219 aa).

Belongs to the IspD/TarI cytidylyltransferase family. IspD subfamily.

The enzyme catalyses 2-C-methyl-D-erythritol 4-phosphate + CTP + H(+) = 4-CDP-2-C-methyl-D-erythritol + diphosphate. The protein operates within isoprenoid biosynthesis; isopentenyl diphosphate biosynthesis via DXP pathway; isopentenyl diphosphate from 1-deoxy-D-xylulose 5-phosphate: step 2/6. Catalyzes the formation of 4-diphosphocytidyl-2-C-methyl-D-erythritol from CTP and 2-C-methyl-D-erythritol 4-phosphate (MEP). The polypeptide is 2-C-methyl-D-erythritol 4-phosphate cytidylyltransferase (Bacteroides thetaiotaomicron (strain ATCC 29148 / DSM 2079 / JCM 5827 / CCUG 10774 / NCTC 10582 / VPI-5482 / E50)).